The primary structure comprises 441 residues: Rho-associated protein kinase 1 (441 aa).

A coiled-coil region spans residues 1–99; it reads NSKSQMDKDY…RLEQEVNEHK (99 aa). Residues 114 to 353 are SHROOM3 binding; it reads EAKSVAMCEM…TLSRLEETNS (240 aa). The RhoBD domain maps to 356–422; sequence TKDIELLRKE…LAEIMNRKDF (67 aa). Residues 418–441 are a coiled coil; the sequence is NRKDFKIDRKKANTQDLRKKKKKK.

The protein belongs to the protein kinase superfamily. AGC Ser/Thr protein kinase family. As to quaternary structure, homodimer. Interacts with RHOA (activated by GTP), RHOB, RHOC, GEM, MYLC2B, RHOE, PPP1R12A, LIMK1, LIMK2, TSG101, CHORDC1, DAPK3, PFN1, PTEN and JIP3. Interacts with FHOD1 in a Src-dependent manner. Interacts with ITGB1BP1 (via N-terminus and PTB domain). Interacts with SHROOM3. Mg(2+) serves as cofactor.

The protein localises to the cytoplasm. It is found in the golgi apparatus membrane. It localises to the cytoskeleton. Its subcellular location is the microtubule organizing center. The protein resides in the centrosome. The protein localises to the centriole. It is found in the cell projection. It localises to the bleb. Its subcellular location is the cell membrane. The protein resides in the lamellipodium. The protein localises to the ruffle. It catalyses the reaction L-seryl-[protein] + ATP = O-phospho-L-seryl-[protein] + ADP + H(+). The enzyme catalyses L-threonyl-[protein] + ATP = O-phospho-L-threonyl-[protein] + ADP + H(+). Activated by RHOA binding. Inhibited by Y-27632. Protein kinase which is a key regulator of the actin cytoskeleton and cell polarity. Involved in regulation of smooth muscle contraction, actin cytoskeleton organization, stress fiber and focal adhesion formation, neurite retraction, cell adhesion and motility via phosphorylation of DAPK3, GFAP, LIMK1, LIMK2, MYL9/MLC2, TPPP, PFN1 and PPP1R12A. Phosphorylates FHOD1 and acts synergistically with it to promote SRC-dependent non-apoptotic plasma membrane blebbing. Phosphorylates JIP3 and regulates the recruitment of JNK to JIP3 upon UVB-induced stress. Acts as a suppressor of inflammatory cell migration by regulating PTEN phosphorylation and stability. Acts as a negative regulator of VEGF-induced angiogenic endothelial cell activation. Required for centrosome positioning and centrosome-dependent exit from mitosis. Plays a role in terminal erythroid differentiation. Inhibits podocyte motility via regulation of actin cytoskeletal dynamics and phosphorylation of CFL1. Promotes keratinocyte terminal differentiation. Involved in osteoblast compaction through the fibronectin fibrillogenesis cell-mediated matrix assembly process, essential for osteoblast mineralization. May regulate closure of the eyelids and ventral body wall by inducing the assembly of actomyosin bundles. The polypeptide is Rho-associated protein kinase 1 (ROCK1) (Bos taurus (Bovine)).